The primary structure comprises 347 residues: Tetraacyldisaccharide 4'-kinase (347 aa).

Residue 65–72 (FVGGTGKT) participates in ATP binding.

The protein belongs to the LpxK family.

The catalysed reaction is a lipid A disaccharide + ATP = a lipid IVA + ADP + H(+). It participates in glycolipid biosynthesis; lipid IV(A) biosynthesis; lipid IV(A) from (3R)-3-hydroxytetradecanoyl-[acyl-carrier-protein] and UDP-N-acetyl-alpha-D-glucosamine: step 6/6. Its function is as follows. Transfers the gamma-phosphate of ATP to the 4'-position of a tetraacyldisaccharide 1-phosphate intermediate (termed DS-1-P) to form tetraacyldisaccharide 1,4'-bis-phosphate (lipid IVA). The sequence is that of Tetraacyldisaccharide 4'-kinase from Janthinobacterium sp. (strain Marseille) (Minibacterium massiliensis).